The primary structure comprises 425 residues: Alpha/beta hydrolase xenA (425 aa).

Aspartate 366 is an active-site residue.

This sequence belongs to the AB hydrolase superfamily. FUS2 hydrolase family. As to quaternary structure, homodimer.

Its pathway is mycotoxin biosynthesis. In terms of biological role, alpha/beta hydrolase; part of the gene cluster that mediates the biosynthesis of xenoacremones such as xenoacremone A, a compound that shows inhibitory activity toward the PI3K/AKT signaling pathway and which has the ability to induce apoptosis of A549 lung cancer cells. Within the pathway, cooperation of the hybrid PKS-NRPS xenE and the trans-acting enoyl reductase xenG is responsible for the formation of the reduced tyrosine-nonaketide derivative. The alpha/beta hydrolase xenA then accelerates intramolecular nucleophilic attack to give a pyrrolidone derivative. Subsequently, three enzymes, xenF, xenD, and xenC, coordinately participate in the conversion to xenoacremone B. XenF catalyzes sigmatropic rearrangement to form an A-ring, which leads to an unusual intermediate with a hexane ring, which is required for the formation of the tricarbocyclic product. Epoxidation catalyzed by xenD and the formation of the paracyclophane ether catalyzed by xenC initiate a spontaneous intramolecular Diels-Alder (IMDA) reaction to yield xenoacremone B. Spontaneous hydration of xenoacremone B leads to the formation of xenoacremone A, which undergoes subsequent methylation to afford xenoacremone C. This Xenoacremonium sinensis (Endophyte fungus) protein is Alpha/beta hydrolase xenA.